We begin with the raw amino-acid sequence, 141 residues long: uncharacterized protein (141 aa).

This is an uncharacterized protein from Sinorhizobium fredii (strain NBRC 101917 / NGR234).